We begin with the raw amino-acid sequence, 600 residues long: Isocitrate dehydrogenase kinase/phosphatase (600 aa).

ATP contacts are provided by residues 335–341 and K356; that span reads APGIRGM. D390 is a catalytic residue.

This sequence belongs to the AceK family.

The protein resides in the cytoplasm. The catalysed reaction is L-seryl-[isocitrate dehydrogenase] + ATP = O-phospho-L-seryl-[isocitrate dehydrogenase] + ADP + H(+). Bifunctional enzyme which can phosphorylate or dephosphorylate isocitrate dehydrogenase (IDH) on a specific serine residue. This is a regulatory mechanism which enables bacteria to bypass the Krebs cycle via the glyoxylate shunt in response to the source of carbon. When bacteria are grown on glucose, IDH is fully active and unphosphorylated, but when grown on acetate or ethanol, the activity of IDH declines drastically concomitant with its phosphorylation. In Bordetella parapertussis (strain 12822 / ATCC BAA-587 / NCTC 13253), this protein is Isocitrate dehydrogenase kinase/phosphatase.